Consider the following 106-residue polypeptide: Apovitellenin-1 (106 aa).

The N-terminal stretch at 1–24 (MVQYRALVIAVILLLSTTVPEVHS) is a signal peptide.

Belongs to the apovitellenin family. As to quaternary structure, homodimer; disulfide-linked. As to expression, produced by the liver, secreted into the blood and then sequestred by receptor mediated endocytosis into growing oocytes.

In terms of biological role, protein component of the very low density lipoprotein (VLDL) of egg-laying females. Potent lipoprotein lipase inhibitor, preventing the loss of triglycerides from VLDL on their way from the liver to the growing oocytes. This is Apovitellenin-1 from Gallus gallus (Chicken).